The following is a 220-amino-acid chain: LOB domain-containing protein 31 (220 aa).

Positions 10–112 (GPCGACKFLR…AELAYVQTQL (103 aa)) constitute an LOB domain. The interval 117–172 (GLPPPNSQNNSRTEAASSSNVPLISSVDSKDNMSSSSSHIPCMSQQQEQEQPKEAI) is disordered. A compositionally biased stretch (polar residues) spans 123–139 (SQNNSRTEAASSSNVPL).

It belongs to the LOB domain-containing protein family. Expressed in roots, stems and flowers.

This is LOB domain-containing protein 31 (LBD31) from Arabidopsis thaliana (Mouse-ear cress).